Consider the following 308-residue polypeptide: Mycothiol acetyltransferase (308 aa).

Residue Glu-44 participates in 1D-myo-inositol 2-(L-cysteinylamino)-2-deoxy-alpha-D-glucopyranoside binding. Residue 83-85 (AVV) coordinates acetyl-CoA. Residues 161-308 (VRLRTYAGSA…DVAYGRPEGD (148 aa)) enclose the N-acetyltransferase domain. Residues Glu-188, Lys-230, and Glu-238 each coordinate 1D-myo-inositol 2-(L-cysteinylamino)-2-deoxy-alpha-D-glucopyranoside. Acetyl-CoA is bound by residues 242-244 (VGV) and 249-255 (QGRGLGR). Tyr-276 is a 1D-myo-inositol 2-(L-cysteinylamino)-2-deoxy-alpha-D-glucopyranoside binding site. Acetyl-CoA is bound at residue 281–286 (NTAALH).

The protein belongs to the acetyltransferase family. MshD subfamily. As to quaternary structure, monomer.

The enzyme catalyses 1D-myo-inositol 2-(L-cysteinylamino)-2-deoxy-alpha-D-glucopyranoside + acetyl-CoA = mycothiol + CoA + H(+). Functionally, catalyzes the transfer of acetyl from acetyl-CoA to desacetylmycothiol (Cys-GlcN-Ins) to form mycothiol. The sequence is that of Mycothiol acetyltransferase from Gordonia bronchialis (strain ATCC 25592 / DSM 43247 / BCRC 13721 / JCM 3198 / KCTC 3076 / NBRC 16047 / NCTC 10667) (Rhodococcus bronchialis).